The primary structure comprises 421 residues: MDIIDIKTYMHSIGREARAASRLIAKAETAAKNRALTQMAVAIKRDEQQLLAANARDVENAKERGLEAAMIDRLTLTPKSVASMAEGLLQIAALADPVGEISDLNYRPSGIQVGKMRVPLGVIGIIYEARPNVTADAAGLCLKAGNAAILRGGSEAIYSNQAIAACVREGLKTAGLPETAIQVIETTDRAAVGELVTMKEFVDVIVPRGGKGLIERISNEARIPVIKHLDGVCHIYIDEEADQEKAIRVADNAKTQRYGTCNTLETLLVHENIAGEVLPPLCRIYLDKGVELRGDPASQAIIPEMKEAREEDWYTEYLAPVLSVRVVSSLDQAIEHITIYGSQHTDSIITENYSNARRFLREVDSSSVMVNASTRFADGFEYGLGAEIGISTDKLHARGPVGLEGLTSQKFIVLGDGHIRQ.

Belongs to the gamma-glutamyl phosphate reductase family.

Its subcellular location is the cytoplasm. It catalyses the reaction L-glutamate 5-semialdehyde + phosphate + NADP(+) = L-glutamyl 5-phosphate + NADPH + H(+). It participates in amino-acid biosynthesis; L-proline biosynthesis; L-glutamate 5-semialdehyde from L-glutamate: step 2/2. Functionally, catalyzes the NADPH-dependent reduction of L-glutamate 5-phosphate into L-glutamate 5-semialdehyde and phosphate. The product spontaneously undergoes cyclization to form 1-pyrroline-5-carboxylate. This Nitrosospira multiformis (strain ATCC 25196 / NCIMB 11849 / C 71) protein is Gamma-glutamyl phosphate reductase.